We begin with the raw amino-acid sequence, 1445 residues long: MDNTIGPRVDPSIRAFDFTALFEECFLDILPWSLFLLMLLVRLKFLLNRPKIIRVDRLCLIKEALWTLYAVVKLAQLILWASIAAFTTAGTVPAAALAFVGCMGGSVLSYFEHCRSRRPSSLLGILTLLILLCDVTRVRTMWLMDQPRAISILTTAALPINILLLVFESLTKTAVANEKEASRSKEEIVGILNRSVFWWLNSLFILGRKHVLHMGNLPRVDSKVLTSYAAPKVYERWESKPQSLMLQSLQAYPMTLLRGGLCRLFTALFVTSQPLLLKRTIRWFSEPSTPVSDAEGYGLIGAYLVVYGGRAVFTALAQHQNYRLITMIRASLVSLIYDRTLTLDLVEAKESAALTLMSTDVERIGQGLQFVHEIWATPAEFGVAIFLLQREVALGSLAPVIIIIVAIVGTVLLSMKIDPHQKEWIGAIERRIGSTTDMLRNMRGVKMSGFEDALTSILQAMRVEEVNISRATKLLFIGCQVFSTATATISPVLGFTIYVLMQRAQGKPGLASSSAFTSLSLFSILSSSVYIFLTSVPAIFSGISCFARVENYLVSENITGPTDAEGQDSEASSISAEKISIIAPKIAPSDYLLVIRDGSVRWKGQEKAVLSQINLCIEQGSFCVISGSVGSGKSSLLYAILGEASLKADTFHISTTSIAYCQQSPWLPDISVKECVLNGRDWDEDLYKRVIHACALSEDLAQLSAGDHTKVGYEGGTLSGGQRQRVALARALYSRRRLLLLDDTFSALDPKTEKSVSGNLFSSSGLLRELGTTVICTTGKPGNSNKYADYTLDLNKEGEAQLRNTQKDMQDDEIEASTYSREQNGPKKQEEDANHESNQSPETSQEHELAQESVPTFSSMIFYLRSTGMGFFALSFSLSLVYSFWQNFPTIWVNLWTQHDAKHPYGDLAKYIGVYILCAVLALVTHTVVTWFVNMACNGIDGAAVRAGPTRDTPENSGTASITGRGYVVFTNKHRAPMSYFESVDIGTITNHFSQDMEKVDLEIPLTGVQALFAFTSALVQLVMLSIGTKWMAITFPFIIAILAIIQRQYLKTSRQLRLLDLEAKSPLYSHFTETLSGLATIRAFGTHKQCQSINTERLDCSQGPFYLLYCAQRWLTLVLNLVIGAMAILMMGVTIKLRGSTGAGYIGLAFVNLTTFSQSIQSLLTWWTMMEASIGAVHRVQQFEKETPQEDVLGQVTSPPHSWPKAGLIELKELSASYLSSVSPVLRNVTFTVQPGQKVGICGRTGSGKTSLILCLQRMIKINSGSILIDGLNTSHVPAKTLRERLICIPQDALIFNGTVRLNLDPQSSFTDKQLQDNLRRVELWDLISSKGGLDATMQDGLLSHGQLQLFCLSRVLQKKSPIVILDEVSSSADEESQRLISKIIREDFKDRTVISIAHRLQQIADFDIILVFSQGQLVEQGSPEDLLGRDVSLFQDLFSQQDK.

11 helical membrane passes run 21–41 (LFEECFLDILPWSLFLLMLLV), 77–97 (LILWASIAAFTTAGTVPAAAL), 119–138 (PSSLLGILTLLILLCDVTRV), 150–170 (ISILTTAALPINILLLVFESL), 187–207 (EIVGILNRSVFWWLNSLFILG), 255–277 (TLLRGGLCRLFTALFVTSQPLLL), 297–317 (YGLIGAYLVVYGGRAVFTALA), 368–388 (LQFVHEIWATPAEFGVAIFLL), 392–412 (VALGSLAPVIIIIVAIVGTVL), 481–501 (VFSTATATISPVLGFTIYVLM), and 520–540 (SLFSILSSSVYIFLTSVPAIF). One can recognise an ABC transmembrane type-1 1 domain in the interval 259–541 (GGLCRLFTAL…FLTSVPAIFS (283 aa)). The region spanning 595–821 (IRDGSVRWKG…DEIEASTYSR (227 aa)) is the ABC transporter 1 domain. Residue 627–634 (GSVGSGKS) participates in ATP binding. The interval 803–850 (RNTQKDMQDDEIEASTYSREQNGPKKQEEDANHESNQSPETSQEHELA) is disordered. Residues 824 to 835 (NGPKKQEEDANH) show a composition bias toward basic and acidic residues. The next 6 membrane-spanning stretches (helical) occupy residues 868–888 (GMGFFALSFSLSLVYSFWQNF), 912–932 (IGVYILCAVLALVTHTVVTWF), 1004–1024 (IPLTGVQALFAFTSALVQLVM), 1026–1046 (SIGTKWMAITFPFIIAILAII), 1116–1136 (LTLVLNLVIGAMAILMMGVTI), and 1147–1167 (IGLAFVNLTTFSQSIQSLLTW). One can recognise an ABC transmembrane type-1 2 domain in the interval 974 to 1173 (HRAPMSYFES…LLTWWTMMEA (200 aa)). The 232-residue stretch at 1210 to 1441 (IELKELSASY…DVSLFQDLFS (232 aa)) folds into the ABC transporter 2 domain. An ATP-binding site is contributed by 1244–1251 (GRTGSGKT).

The protein belongs to the ABC transporter superfamily. ABCC family.

The protein localises to the cell membrane. In terms of biological role, ABC-type transporter; part of the gene cluster that mediates the biosynthesis of gramillins A and B, bicyclic lipopeptides that induce cell death in maize leaves but not in wheat leaves. May be involved in the secretion of gramillins. This chain is ABC-type transporter FGSG_00046, found in Gibberella zeae (strain ATCC MYA-4620 / CBS 123657 / FGSC 9075 / NRRL 31084 / PH-1) (Wheat head blight fungus).